Here is a 167-residue protein sequence, read N- to C-terminus: CS6 fimbrial subunit B (167 aa).

The N-terminal stretch at 1–21 (MLKKIISAIALIAGTSGVVNA) is a signal peptide.

The protein localises to the fimbrium. This chain is CS6 fimbrial subunit B (cssB), found in Escherichia coli.